A 607-amino-acid polypeptide reads, in one-letter code: CRS2-associated factor 2, chloroplastic (607 aa).

The tract at residues 1–75 (MSPPPPQRPS…GNGGNPAFRA (75 aa)) is disordered. A chloroplast-targeting transit peptide spans 1–79 (MSPPPPQRPS…NPAFRAPHLR (79 aa)). 2 consecutive CRM domains span residues 228–324 (EPLT…TRPR) and 346–442 (EGLT…YPKP). The CRS2 binding stretch occupies residues 482–505 (KMFELWTNAIESSVALMLDDAEVD). Residues 550–576 (TEDEPETGTLEPQQHEFTESSDVAEDD) form a disordered region.

In terms of assembly, interacts with CRS2 and RNA. Part of large ribonucleo-protein complexes that include group IIB introns, CRS2 and CAF2.

Its subcellular location is the plastid. The protein localises to the chloroplast stroma. Required for the splicing of group IIB introns in chloroplasts. Forms splicing particles with CRS2. Interacts with RNA and confers intron specificity of the splicing particles. This chain is CRS2-associated factor 2, chloroplastic, found in Oryza sativa subsp. japonica (Rice).